Consider the following 92-residue polypeptide: N(2)-fixation sustaining protein CowN (92 aa).

Belongs to the CowN family.

Is required to sustain N(2)-dependent growth in the presence of low levels of carbon monoxide (CO). Probably acts by protecting the N(2) fixation ability of the nitrogenase complex, which is inactivated in the presence of CO. The sequence is that of N(2)-fixation sustaining protein CowN from Cereibacter sphaeroides (strain KD131 / KCTC 12085) (Rhodobacter sphaeroides).